A 23-amino-acid chain; its full sequence is ENFAVGCTPGYQRTADGRCKPTF.

An intrachain disulfide couples C7 to C19.

It belongs to the GBP/PSP1/paralytic peptide family.

In terms of biological role, has excitatory effects on a semi-isolated heart from larval Manduca sexta, causing an inotropic effect at low concentrations of peptide and chronotropic and inotropic effects at high doses. In Spodoptera eridania (Southern armyworm), this protein is Cardioactive peptide CAP23.